The following is a 131-amino-acid chain: Transcription antitermination protein NusB (131 aa).

This sequence belongs to the NusB family.

Involved in transcription antitermination. Required for transcription of ribosomal RNA (rRNA) genes. Binds specifically to the boxA antiterminator sequence of the ribosomal RNA (rrn) operons. The protein is Transcription antitermination protein NusB of Aliarcobacter butzleri (strain RM4018) (Arcobacter butzleri).